Reading from the N-terminus, the 129-residue chain is Holo-[acyl-carrier-protein] synthase (129 aa).

Mg(2+) contacts are provided by aspartate 8 and glutamate 58.

This sequence belongs to the P-Pant transferase superfamily. AcpS family. Mg(2+) serves as cofactor.

It localises to the cytoplasm. The enzyme catalyses apo-[ACP] + CoA = holo-[ACP] + adenosine 3',5'-bisphosphate + H(+). Its function is as follows. Transfers the 4'-phosphopantetheine moiety from coenzyme A to a Ser of acyl-carrier-protein. This chain is Holo-[acyl-carrier-protein] synthase, found in Geobacillus kaustophilus (strain HTA426).